A 103-amino-acid polypeptide reads, in one-letter code: Small ribosomal subunit protein uS14c (103 aa).

This sequence belongs to the universal ribosomal protein uS14 family. Part of the 30S ribosomal subunit.

The protein localises to the plastid. It localises to the chloroplast. Binds 16S rRNA, required for the assembly of 30S particles. The protein is Small ribosomal subunit protein uS14c of Oryza nivara (Indian wild rice).